Consider the following 718-residue polypeptide: K(+)-insensitive pyrophosphate-energized proton pump (718 aa).

A run of 6 helical transmembrane segments spans residues 6-26, 61-81, 83-103, 112-132, 133-153, and 168-188; these read AVLV…IWAI, IAIV…LNAA, GFLI…HVSV, AASL…AITG, LLVA…LTVW, and VSLG…GGIF. Lys-190 lines the substrate pocket. The Mg(2+) site is built by Asp-193, Asp-197, Asn-220, and Asp-223. 6 consecutive transmembrane segments (helical) span residues 235–255, 265–285, 300–320, 335–355, 385–405, and 413–433; these read LFET…IFFH, LYPL…TFFV, GLIA…TLTV, GTNL…IVVI, GLAV…GGII, and LFGT…IVAL. Asp-441 is a binding site for Mg(2+). The next 4 helical transmembrane spans lie at 472 to 492, 524 to 544, 593 to 613, and 620 to 640; these read AVTK…LFAA, YVVA…GMAM, IIPS…VLLI, and AFAA…FVAI. Residues Asp-650, Asp-682, and Asp-686 each coordinate Ca(2+). Lys-689 contributes to the substrate binding site. The chain crosses the membrane as a helical span at residues 695-715; sequence AVNPAIKITNIVALLLLAVLA.

Belongs to the H(+)-translocating pyrophosphatase (TC 3.A.10) family. K(+)-insensitive subfamily. As to quaternary structure, homodimer. Mg(2+) serves as cofactor.

The protein localises to the cell inner membrane. The enzyme catalyses diphosphate + H2O + H(+)(in) = 2 phosphate + 2 H(+)(out). Proton pump that utilizes the energy of pyrophosphate hydrolysis as the driving force for proton movement across the membrane. Generates a proton motive force. This is K(+)-insensitive pyrophosphate-energized proton pump from Brucella melitensis biotype 1 (strain ATCC 23456 / CCUG 17765 / NCTC 10094 / 16M).